The chain runs to 403 residues: 1-deoxy-D-xylulose 5-phosphate reductoisomerase (403 aa).

6 residues coordinate NADPH: Thr18, Gly19, Ser20, Ile21, Gln46, and Asn132. Position 133 (Lys133) interacts with 1-deoxy-D-xylulose 5-phosphate. Residue Glu134 coordinates NADPH. Asp158 contacts Mn(2+). Ser159, Glu160, Ser189, and His212 together coordinate 1-deoxy-D-xylulose 5-phosphate. Residue Glu160 participates in Mn(2+) binding. Gly218 contributes to the NADPH binding site. 4 residues coordinate 1-deoxy-D-xylulose 5-phosphate: Ser225, Asn230, Lys231, and Glu234. Glu234 serves as a coordination point for Mn(2+).

Belongs to the DXR family. It depends on Mg(2+) as a cofactor. Mn(2+) is required as a cofactor.

The enzyme catalyses 2-C-methyl-D-erythritol 4-phosphate + NADP(+) = 1-deoxy-D-xylulose 5-phosphate + NADPH + H(+). It functions in the pathway isoprenoid biosynthesis; isopentenyl diphosphate biosynthesis via DXP pathway; isopentenyl diphosphate from 1-deoxy-D-xylulose 5-phosphate: step 1/6. Catalyzes the NADPH-dependent rearrangement and reduction of 1-deoxy-D-xylulose-5-phosphate (DXP) to 2-C-methyl-D-erythritol 4-phosphate (MEP). The polypeptide is 1-deoxy-D-xylulose 5-phosphate reductoisomerase (Aromatoleum aromaticum (strain DSM 19018 / LMG 30748 / EbN1) (Azoarcus sp. (strain EbN1))).